Here is a 505-residue protein sequence, read N- to C-terminus: Lysine--tRNA ligase (505 aa).

2 residues coordinate Mg(2+): glutamate 415 and glutamate 422.

Belongs to the class-II aminoacyl-tRNA synthetase family. In terms of assembly, homodimer. Requires Mg(2+) as cofactor.

The protein localises to the cytoplasm. It catalyses the reaction tRNA(Lys) + L-lysine + ATP = L-lysyl-tRNA(Lys) + AMP + diphosphate. The polypeptide is Lysine--tRNA ligase (lysS) (Salmonella typhimurium (strain LT2 / SGSC1412 / ATCC 700720)).